The chain runs to 354 residues: uncharacterized protein (354 aa).

Transmembrane regions (helical) follow at residues 9 to 29, 31 to 51, 76 to 96, 109 to 129, 144 to 164, 185 to 205, 278 to 298, 306 to 326, and 327 to 347; these read MGKIELHHVFVMLSCIYLIFS, ISINSAVVFLFSSIFFYISFT, NFGIFLMIVGLIAVTSDLIWV, FLNVYFTTLSHLFLVGWAIVV, IIFSILIMLLGYRTNVLVLLI, GILVFVILLGLSILRLYALGV, YGTLAIIPYFGILGIFLGFFY, GIYLGIYGILFAYTLIGIESG, and ILDIDVILYYFFGLILCIYAI.

It is found in the cell membrane. This is an uncharacterized protein from Methanocaldococcus jannaschii (strain ATCC 43067 / DSM 2661 / JAL-1 / JCM 10045 / NBRC 100440) (Methanococcus jannaschii).